The sequence spans 347 residues: Extracellular metalloprotease (347 aa).

Residues 1–20 (MKSRPICSVIPPYILHRIIA) form the signal peptide. A disordered region spans residues 43-68 (SHHPRPEPHEKLPAGQANRSIHDAEQ). Residue His162 coordinates Zn(2+). Glu163 is an active-site residue. The Zn(2+) site is built by His166 and Glu186. His264 serves as the catalytic Proton donor.

Belongs to the peptidase M4 family. Ca(2+) serves as cofactor. Zn(2+) is required as a cofactor.

It is found in the secreted. The chain is Extracellular metalloprotease (prt1) from Pectobacterium carotovorum subsp. carotovorum (Erwinia carotovora subsp. carotovora).